The sequence spans 120 residues: UPF0102 protein TW312 (120 aa).

The protein belongs to the UPF0102 family.

The protein is UPF0102 protein TW312 of Tropheryma whipplei (strain TW08/27) (Whipple's bacillus).